We begin with the raw amino-acid sequence, 61 residues long: Metallothionein-1E (61 aa).

The residue at position 1 (Met-1) is an N-acetylmethionine. The interval 1–29 is beta; that stretch reads MDPNCSCATGGSCTCAGSCKCKECKCTSC. Positions 5, 7, 13, 15, 19, 21, 24, 26, 29, 33, 34, 36, 37, 41, 44, 48, 50, 57, 59, and 60 each coordinate a divalent metal cation. The segment at 30–61 is alpha; that stretch reads KKSCCSCCPVGCAKCAQGCVCKGASEKCSCCA.

This sequence belongs to the metallothionein superfamily. Type 1 family. As to quaternary structure, monomer.

Functionally, metallothioneins have a high content of cysteine residues that bind various heavy metals; these proteins are transcriptionally regulated by both heavy metals and glucocorticoids. The chain is Metallothionein-1E (MT1E) from Homo sapiens (Human).